The sequence spans 241 residues: Uridylate kinase (241 aa).

ATP is bound at residue 15–18 (KISG). The tract at residues 23-28 (GDQGFG) is involved in allosteric activation by GTP. Residue glycine 57 participates in UMP binding. Positions 58 and 62 each coordinate ATP. UMP-binding positions include aspartate 77 and 138–145 (TGNPYFTT). Threonine 165, tyrosine 171, and aspartate 174 together coordinate ATP.

This sequence belongs to the UMP kinase family. Homohexamer.

Its subcellular location is the cytoplasm. The catalysed reaction is UMP + ATP = UDP + ADP. Its pathway is pyrimidine metabolism; CTP biosynthesis via de novo pathway; UDP from UMP (UMPK route): step 1/1. Allosterically activated by GTP. Inhibited by UTP. Its function is as follows. Catalyzes the reversible phosphorylation of UMP to UDP. In Paracoccus zeaxanthinifaciens, this protein is Uridylate kinase.